The sequence spans 247 residues: Putative methyltransferase YqeM (247 aa).

Belongs to the methyltransferase superfamily.

Its function is as follows. May be a S-adenosyl-L-methionine (SAM)-dependent methyltransferase. This is Putative methyltransferase YqeM (yqeM) from Bacillus subtilis (strain 168).